The chain runs to 332 residues: L-lactate dehydrogenase A-like 6A (332 aa).

Residue Ala2 is modified to N-acetylalanine. Lys5 and Lys57 each carry N6-acetyllysine; alternate. Lys5 is subject to N6-succinyllysine; alternate. Position 29–57 (29–57 (GSVGVACAISILLKGLSDELVLVDVDEGK)) interacts with NAD(+). Residue Lys57 forms a Glycyl lysine isopeptide (Lys-Gly) (interchain with G-Cter in SUMO2); alternate linkage. Residue Lys81 is modified to N6-acetyllysine. Arg99 lines the NAD(+) pocket. Arg106 provides a ligand contact to substrate. Lys118 is subject to N6-acetyllysine; alternate. Position 118 is an N6-succinyllysine; alternate (Lys118). Asn138 is a binding site for NAD(+). 2 residues coordinate substrate: Asn138 and Arg169. His193 acts as the Proton acceptor in catalysis. Residue Lys232 is modified to N6-acetyllysine. The residue at position 239 (Tyr239) is a Phosphotyrosine. Lys243 carries the N6-acetyllysine modification. Residue Thr248 coordinates substrate. Position 309 is a phosphothreonine (Thr309). Lys318 is subject to N6-acetyllysine; alternate. N6-succinyllysine; alternate is present on Lys318. Thr322 bears the Phosphothreonine mark.

This sequence belongs to the LDH/MDH superfamily. LDH family. In terms of tissue distribution, testis-specific.

Its subcellular location is the cytoplasm. It catalyses the reaction (S)-lactate + NAD(+) = pyruvate + NADH + H(+). Its pathway is fermentation; pyruvate fermentation to lactate; (S)-lactate from pyruvate: step 1/1. Functionally, catalyzes the interconversion of L-lactate and pyruvate with nicotinamide adenine dinucleotide NAD(+) as a coenzyme. Significantly increases the transcriptional activity of JUN, when overexpressed. This Homo sapiens (Human) protein is L-lactate dehydrogenase A-like 6A (LDHAL6A).